The primary structure comprises 199 residues: Holliday junction branch migration complex subunit RuvA (199 aa).

The segment at 1 to 64 is domain I; sequence MIAKLTGRLD…EDFLRLLGFA (64 aa). The tract at residues 65-143 is domain II; that stretch reads RAEERDWFRL…ALGGISGSGP (79 aa). A flexible linker region spans residues 144 to 146; the sequence is ALS. The segment at 147–199 is domain III; that stretch reads AAAGPVGDAIAALTGLGFKPGEASAAVAAANEELGADASLDALVRVALKKAAK.

This sequence belongs to the RuvA family. In terms of assembly, homotetramer. Forms an RuvA(8)-RuvB(12)-Holliday junction (HJ) complex. HJ DNA is sandwiched between 2 RuvA tetramers; dsDNA enters through RuvA and exits via RuvB. An RuvB hexamer assembles on each DNA strand where it exits the tetramer. Each RuvB hexamer is contacted by two RuvA subunits (via domain III) on 2 adjacent RuvB subunits; this complex drives branch migration. In the full resolvosome a probable DNA-RuvA(4)-RuvB(12)-RuvC(2) complex forms which resolves the HJ.

The protein resides in the cytoplasm. The RuvA-RuvB-RuvC complex processes Holliday junction (HJ) DNA during genetic recombination and DNA repair, while the RuvA-RuvB complex plays an important role in the rescue of blocked DNA replication forks via replication fork reversal (RFR). RuvA specifically binds to HJ cruciform DNA, conferring on it an open structure. The RuvB hexamer acts as an ATP-dependent pump, pulling dsDNA into and through the RuvAB complex. HJ branch migration allows RuvC to scan DNA until it finds its consensus sequence, where it cleaves and resolves the cruciform DNA. This Sphingopyxis alaskensis (strain DSM 13593 / LMG 18877 / RB2256) (Sphingomonas alaskensis) protein is Holliday junction branch migration complex subunit RuvA.